The chain runs to 65 residues: Large ribosomal subunit protein bL35 (65 aa).

This sequence belongs to the bacterial ribosomal protein bL35 family.

The chain is Large ribosomal subunit protein bL35 from Laribacter hongkongensis (strain HLHK9).